The sequence spans 560 residues: Platelet glycoprotein V (560 aa).

An N-terminal signal peptide occupies residues 1 to 16 (MLRGTLLCAVLGLLRA). The 34-residue stretch at 17–50 (QPFPCPPACKCVFRDAAQCSGGDVARISALGLPT) folds into the LRRNT domain. The Extracellular portion of the chain corresponds to 17 to 523 (QPFPCPPACK…KGQDHSPFWG (507 aa)). Asn-51 is a glycosylation site (N-linked (GlcNAc...) asparagine). 13 LRR repeats span residues 75-96 (VLQRLMISDSHISAVAPGTFSD), 99-120 (KLKTLRLSRNKITHLPGALLDK), 123-144 (LLEQLFLDHNALRGIDQNMFQK), 147-168 (NLQELALNQNQLDFLPASLFTN), 171-193 (NLKLLDLSGNNLTHLPKGLLGAQ), 195-216 (KLERLLLHSNRLVSLDSGLLNS), 219-240 (ALTELQFHRNHIRSIAPGAFDR), 243-264 (NLSSLTLSRNHLAFLPSALFLH), 267-288 (NLTLLTLFENPLAELPGVLFGE), 291-312 (GLQELWLNRTQLRTLPAAAFRN), 340-361 (ELQVLALHSNGLTALPDGLLRG), 364-385 (KLRQVSLRRNRLRALPRALFRN), and 388-409 (SLESVQLDHNQLETLPGDVFGA). The N-linked (GlcNAc...) (complex) asparagine glycan is linked to Asn-181. N-linked (GlcNAc...) (complex) asparagine glycosylation occurs at Asn-243. 3 N-linked (GlcNAc...) asparagine glycosylation sites follow: Asn-267, Asn-298, and Asn-312. The N-linked (GlcNAc...) asparagine glycan is linked to Asn-385. The 54-residue stretch at 421 to 474 (NSWRCDCGLGPFLGWLRQHLGLVGGEEPPRCAGPGAHAGLPLWALPGGDAECPG) folds into the LRRCT domain. The disordered stretch occupies residues 469 to 498 (DAECPGPRGPPPRPAADSSSEAPVHPALAP). Asn-499 carries an N-linked (GlcNAc...) asparagine glycan. A helical transmembrane segment spans residues 524 to 544 (FYFLLLAVQAMITVIIVFAMI). Residues 545 to 560 (KIGQLFRKLIRERALG) lie on the Cytoplasmic side of the membrane.

In terms of processing, the N-terminus is blocked. In terms of tissue distribution, platelets and megakaryocytes.

Its subcellular location is the membrane. Functionally, the GPIb-V-IX complex functions as the vWF receptor and mediates vWF-dependent platelet adhesion to blood vessels. The adhesion of platelets to injured vascular surfaces in the arterial circulation is a critical initiating event in hemostasis. The chain is Platelet glycoprotein V (GP5) from Homo sapiens (Human).